A 377-amino-acid chain; its full sequence is Sterol 24-C-methyltransferase (377 aa).

It belongs to the class I-like SAM-binding methyltransferase superfamily. Erg6/SMT family.

It carries out the reaction lanosterol + S-adenosyl-L-methionine = eburicol + S-adenosyl-L-homocysteine + H(+). The catalysed reaction is eburicol + S-adenosyl-L-methionine = (24Z)-ethylidenelanosterol + S-adenosyl-L-homocysteine + H(+). It functions in the pathway steroid metabolism. Functionally, catalyzes the transfer of 2 methyl groups from 2 S-adenosyl-methionine molecules to the C-24 of lanosterol, producing first eburicol (24-methylenelanosterol) from lanosterol and then pneumocysterol (24Z-ethylidenelanosterol) from eburicol. The chain is Sterol 24-C-methyltransferase (erg6) from Pneumocystis carinii (strain B80) (Rat pneumocystis pneumonia agent).